Consider the following 171-residue polypeptide: MEHKETGCQQPEGPILCINNCGFFGSAATMNMCSKCHKEMIMKQEQAKLAASSIDSIVNGGDSGKEPIIAGHAEVAVAQVEVKTLVAQPAEIAGPSEGVTVNPKGREGPNRCSTCRKRVGLTGFNCRCGNLYCAMHRYSDKHDCQFDYRTAARDAIAKANPVVKAEKLDKI.

An A20-type zinc finger spans residues 11 to 45 (PEGPILCINNCGFFGSAATMNMCSKCHKEMIMKQE). Cys-17, Cys-21, Cys-33, Cys-36, Cys-112, Cys-115, Cys-126, Cys-128, Cys-133, His-136, His-142, and Cys-144 together coordinate Zn(2+). Residues 106–152 (REGPNRCSTCRKRVGLTGFNCRCGNLYCAMHRYSDKHDCQFDYRTAA) form an AN1-type zinc finger.

Its function is as follows. May be involved in environmental stress response. The polypeptide is Zinc finger A20 and AN1 domain-containing stress-associated protein 8 (SAP8) (Oryza sativa subsp. indica (Rice)).